A 323-amino-acid chain; its full sequence is C-type lectin domain family 11 member A (323 aa).

Positions 1-21 (MQAAWLLGALVVPQLLGFGHG) are cleaved as a signal peptide. Disordered regions lie at residues 55 to 106 (LGLP…TPED) and 272 to 295 (LGAQPSASPHPLSPDQPNGGTLEN). A Cell attachment site motif is present at residues 61–63 (RGD). The span at 74 to 90 (EDWEMEEDQGEEEEEEA) shows a compositional bias: acidic residues. A C-type lectin domain is found at 183–320 (LGHKCFLLSR…CQRRLYYVCE (138 aa)). Cystine bridges form between cysteine 204–cysteine 319 and cysteine 296–cysteine 311.

In terms of processing, O-glycosylated. Probably sulfated on the O-glycans. In terms of tissue distribution, expressed in skeletal tissues including bone marrow, chondrocytes, primary ossification center-associated cells, the perichondrium and periosteum. Lower levels of expression were detected in spleen, thymus, appendix and fetal liver.

The protein localises to the cytoplasm. Its subcellular location is the secreted. Promotes osteogenesis by stimulating the differentiation of mesenchymal progenitors into mature osteoblasts. Important for repair and maintenance of adult bone. The protein is C-type lectin domain family 11 member A (CLEC11A) of Homo sapiens (Human).